The chain runs to 270 residues: MRIALGIQYDGAAFCGWQSQPHGKTVQDALERSLAEFAQTSLHTTVAGRTDTGVHGLGQVVHFDTDLDRADFSWVRGTNAFLPPTVAVQWAKPMPDTFHARFAAFERTYYYALYVHPVRSPMLAGRAGWVHTPLDVDAMREAAAHLVGEHDFSAFRSSECQAKSPVKHLYQIGIRPDGDFIHFRFRANAFLHHMVRNLMGCLVAVGRGRYPSSWLAEVLESRDRDCAAPTFMPEGLYLAHVGYPAEFAVPPAQLGSVPWSSVWADLDGRT.

D51 acts as the Nucleophile in catalysis. Position 109 (Y109) interacts with substrate.

This sequence belongs to the tRNA pseudouridine synthase TruA family. In terms of assembly, homodimer.

It carries out the reaction uridine(38/39/40) in tRNA = pseudouridine(38/39/40) in tRNA. Formation of pseudouridine at positions 38, 39 and 40 in the anticodon stem and loop of transfer RNAs. The protein is tRNA pseudouridine synthase A of Burkholderia mallei (strain ATCC 23344).